The following is a 513-amino-acid chain: Ankyrin repeat-containing protein YIL001W (513 aa).

ANK repeat units lie at residues 8–37 (KNFE…NVNS) and 41–70 (FDNS…VCDR). 2 BTB domains span residues 122 to 179 (RDIT…KFLY) and 274 to 360 (PDVQ…DIPW).

In Saccharomyces cerevisiae (strain ATCC 204508 / S288c) (Baker's yeast), this protein is Ankyrin repeat-containing protein YIL001W.